Reading from the N-terminus, the 974-residue chain is Hexokinase-1 (974 aa).

The interval 1–42 (MGWGAPLLSRMLHGPGQAGETSPVPERQSGSENPASEDRRPL) is disordered. The mitochondrial-binding peptide (MBP) stretch occupies residues 57 to 66 (CQRGQAVDVE). Hexokinase domains lie at 72-514 (PLTE…MVTA) and 520-962 (AEQH…LITA). ATP is bound by residues arginine 86 and 140–145 (DLGGSS). The hexokinase small subdomain 1 stretch occupies residues 129–263 (DGSEKGDFIA…DYDANIVAVV (135 aa)). 140 to 147 (DLGGSSFR) serves as a coordination point for D-glucose 6-phosphate. D-glucose-binding positions include serine 211, 228 to 229 (TK), and 264 to 265 (ND). The interval 264–503 (NDTVGTMMTC…SDVRFLLSES (240 aa)) is hexokinase large subdomain 1. Residues aspartate 265 and threonine 288 each coordinate D-glucose 6-phosphate. Residues asparagine 291, glutamate 316, and 347–350 (QLFE) contribute to the D-glucose site. Phosphoserine is present on serine 393. 469–471 (DGS) serves as a coordination point for D-glucose 6-phosphate. 481 to 482 (RR) serves as a coordination point for ATP. D-glucose 6-phosphate is bound by residues serine 505 and 588–592 (DLGGT). The hexokinase small subdomain 2 stretch occupies residues 577 to 711 (DGTEHGDFLA…EFDLDVVAVV (135 aa)). Position 588–593 (588–593 (DLGGTN)) interacts with ATP. D-glucose is bound by residues 659–660 (SF), 676–677 (TK), and 712–713 (ND). The hexokinase large subdomain 2 stretch occupies residues 712 to 951 (NDTVGTMMTC…CTVSFLLSED (240 aa)). Aspartate 713 and threonine 736 together coordinate D-glucose 6-phosphate. Threonine 736 contacts ATP. D-glucose-binding positions include 738-739 (SN), glutamate 764, and glutamate 798. Residues 803–804 (GM), 840–844 (TKFLS), and 919–923 (TLYKL) contribute to the ATP site. Residues 917 to 919 (DGT) and serine 953 contribute to the D-glucose 6-phosphate site.

This sequence belongs to the hexokinase family. In terms of assembly, monomer. Interacts with RABL2/RABL2A; binds preferentially to GTP-bound RABL2. Interacts with VDAC1. The HK1-VDAC1 complex interacts with ATF2. Interacts (via N-terminal spermatogenic cell-specific region) with PFKM isoform 2 and isoform 3 (via C-terminus). Interacts with SMAD5. Post-translationally, tyrosine-phosphorylated. In terms of tissue distribution, in rapidly growing tumor cells exhibiting high glucose catabolic rates, isoform HK1 is markedly elevated. Isoform HK1-SA, isoform HK1-SB and isoform HK1-SC are found only in spermatogenic cells. Isoform HK1-SC is detected in round spermatids, condensing spermatids and mature sperm where it is found in the head membranes, mitochondria of the midpiece and the fibrous sheath of the flagellum. Expressed within the principal piece and midpiece of sperm tail (at protein level).

The protein localises to the mitochondrion outer membrane. The protein resides in the cytoplasm. It localises to the cytosol. It is found in the membrane. The catalysed reaction is a D-hexose + ATP = a D-hexose 6-phosphate + ADP + H(+). The enzyme catalyses D-fructose + ATP = D-fructose 6-phosphate + ADP + H(+). It carries out the reaction D-glucose + ATP = D-glucose 6-phosphate + ADP + H(+). It catalyses the reaction D-mannose + ATP = D-mannose 6-phosphate + ADP + H(+). The catalysed reaction is D-glucosamine + ATP = D-glucosamine 6-phosphate + ADP + H(+). The protein operates within carbohydrate metabolism; hexose metabolism. Its pathway is carbohydrate degradation; glycolysis; D-glyceraldehyde 3-phosphate and glycerone phosphate from D-glucose: step 1/4. Hexokinase is an allosteric enzyme inhibited by its product D-glucose 6-phosphate. Hexokinase activity is inhibited by N-acetyl-D-glucosamine. Catalyzes the phosphorylation of various hexoses, such as D-glucose, D-glucosamine, D-fructose, D-mannose and 2-deoxy-D-glucose, to hexose 6-phosphate (D-glucose 6-phosphate, D-glucosamine 6-phosphate, D-fructose 6-phosphate, D-mannose 6-phosphate and 2-deoxy-D-glucose 6-phosphate, respectively). Does not phosphorylate N-acetyl-D-glucosamine. Mediates the initial step of glycolysis by catalyzing phosphorylation of D-glucose to D-glucose 6-phosphate. Involved in innate immunity and inflammation by acting as a pattern recognition receptor for bacterial peptidoglycan. When released in the cytosol, N-acetyl-D-glucosamine component of bacterial peptidoglycan inhibits the hexokinase activity of HK1 and causes its dissociation from mitochondrial outer membrane, thereby activating the NLRP3 inflammasome. The chain is Hexokinase-1 from Mus musculus (Mouse).